A 448-amino-acid polypeptide reads, in one-letter code: Clusterin (448 aa).

Positions 1 to 21 (MKILLLCVALLLIWDNGMVLG) are cleaved as a signal peptide. A Nuclear localization signal motif is present at residues 77–80 (KKKK). Cystine bridges form between Cys-101–Cys-312, Cys-112–Cys-304, Cys-115–Cys-301, Cys-120–Cys-294, and Cys-128–Cys-284. N-linked (GlcNAc...) asparagine glycosylation is present at Asn-102. Position 132 is a phosphoserine (Ser-132). Asn-144, Asn-290, Asn-327, Asn-353, and Asn-373 each carry an N-linked (GlcNAc...) asparagine glycan. Ser-395 is modified (phosphoserine). The Nuclear localization signal signature appears at 442–446 (RRKSR).

It belongs to the clusterin family. In terms of assembly, antiparallel disulfide-linked heterodimer of an alpha chain and a beta chain. Self-associates and forms higher oligomers. Interacts with a broad range of misfolded proteins, including APP, APOC2 and LYZ. Slightly acidic pH promotes interaction with misfolded proteins. Forms high-molecular weight oligomers upon interaction with misfolded proteins. Interacts with APOA1, LRP2, CLUAP1 and PON1. Interacts with the complement membrane attack complex. Interacts (via alpha chain) with XRCC6. Interacts with SYVN1, COMMD1, BTRC, CUL1 and with ubiquitin and SCF (SKP1-CUL1-F-box protein) E3 ubiquitin-protein ligase complexes. Interacts (via alpha chain) with BAX in stressed cells, where BAX undergoes a conformation change leading to association with the mitochondrial membrane. Does not interact with BAX in unstressed cells. Found in a complex with LTF, CLU, EPPIN and SEMG1. Interacts (immaturely glycosylated pre-secreted form) with HSPA5; this interaction promotes CLU stability and facilitates stress-induced CLU retrotranslocation from the secretory pathway to the mitochondria, thereby reducing stress-induced apoptosis by stabilizing mitochondrial membrane integrity. Interacts with BCL2L1; this interaction releases and activates BAX and promotes cell death. Interacts with TGFBR2 and ACVR1. Interacts (secreted form) with STMN3; this interaction may act as an important modulator during neuronal differentiation. Interacts with VLDLR and LRP8. Proteolytically cleaved on its way through the secretory system, probably within the Golgi lumen. Proteolytic cleavage is not necessary for its chaperone activity. All non-secreted forms are not proteolytically cleaved. Chaperone activity of uncleaved forms is dependent on a non-reducing environment. In terms of processing, polyubiquitinated, leading to proteasomal degradation. Under cellular stress, the intracellular level of cleaved form is reduced due to proteasomal degradation. Post-translationally, extensively glycosylated with sulfated N-linked carbohydrates. About 30% of the protein mass is comprised of complex N-linked carbohydrate. Endoplasmic reticulum (ER) stress induces changes in glycosylation status and increases level of hypoglycosylated forms. Core carbohydrates are essential for chaperone activity. Non-secreted forms are hypoglycosylated or unglycosylated. Most abundant in stomach, liver, brain, and testis, with intermediate levels in heart, ovary and kidney.

The protein localises to the secreted. Its subcellular location is the nucleus. The protein resides in the cytoplasm. It localises to the mitochondrion membrane. It is found in the cytosol. The protein localises to the microsome. Its subcellular location is the endoplasmic reticulum. The protein resides in the mitochondrion. It localises to the perinuclear region. It is found in the cytoplasmic vesicle. The protein localises to the secretory vesicle. Its subcellular location is the chromaffin granule. Its function is as follows. Functions as extracellular chaperone that prevents aggregation of non native proteins. Prevents stress-induced aggregation of blood plasma proteins. Inhibits formation of amyloid fibrils by APP, APOC2, B2M, CALCA, CSN3, SNCA and aggregation-prone LYZ variants (in vitro). Does not require ATP. Maintains partially unfolded proteins in a state appropriate for subsequent refolding by other chaperones, such as HSPA8/HSC70. Does not refold proteins by itself. Binding to cell surface receptors triggers internalization of the chaperone-client complex and subsequent lysosomal or proteasomal degradation. When secreted, protects cells against apoptosis and against cytolysis by complement: inhibits assembly of the complement membrane attack complex (MAC) by preventing polymerization of C9 pore component of the MAC complex. Intracellular forms interact with ubiquitin and SCF (SKP1-CUL1-F-box protein) E3 ubiquitin-protein ligase complexes and promote the ubiquitination and subsequent proteasomal degradation of target proteins. Promotes proteasomal degradation of COMMD1 and IKBKB. Modulates NF-kappa-B transcriptional activity. Following stress, promotes apoptosis. Inhibits apoptosis when associated with the mitochondrial membrane by interference with BAX-dependent release of cytochrome c into the cytoplasm. Plays a role in the regulation of cell proliferation. Following ER stress, suppresses stress-induced apoptosis by stabilizing mitochondrial membrane integrity through interaction with HSPA5. When secreted, does not affect caspase or BAX-mediated intrinsic apoptosis and TNF-induced NF-kappa-B-activity. When secreted, acts as an important modulator during neuronal differentiation through interaction with STMN3. Plays a role in the clearance of immune complexes that arise during cell injury. This Mus musculus (Mouse) protein is Clusterin.